Here is a 377-residue protein sequence, read N- to C-terminus: Flagellin (377 aa).

It belongs to the bacterial flagellin family.

It localises to the secreted. Its subcellular location is the bacterial flagellum. Its function is as follows. Flagellin is the subunit protein which polymerizes to form the filaments of bacterial flagella. This Clostridium tyrobutyricum protein is Flagellin (fla).